The chain runs to 121 residues: Small ribosomal subunit protein uS13 (121 aa).

Residues 91-121 are disordered; that stretch reads HRRGLPVRGQKTKNNARTRKGPVKTVANKKK.

It belongs to the universal ribosomal protein uS13 family. Part of the 30S ribosomal subunit. Forms a loose heterodimer with protein S19. Forms two bridges to the 50S subunit in the 70S ribosome.

Functionally, located at the top of the head of the 30S subunit, it contacts several helices of the 16S rRNA. In the 70S ribosome it contacts the 23S rRNA (bridge B1a) and protein L5 of the 50S subunit (bridge B1b), connecting the 2 subunits; these bridges are implicated in subunit movement. Contacts the tRNAs in the A and P-sites. The polypeptide is Small ribosomal subunit protein uS13 (Staphylococcus aureus (strain Mu3 / ATCC 700698)).